The chain runs to 278 residues: MKKIGAHVSVSGGVEMAPVNALGIGADAFALFTKNQRQWVAKPLSVESVTLFKENCEKEGFDARYVLPHDSYLINLGHPDEEGLEKSRAAFLDEMQRCELLGLKMLNFHPGSHLNKISIEKCLDRIAESVNMTLDKTTGVTAVIENTAGQGSNVGNEFWHLRYIIDKVEDKSRVGVCLDTCHTYTAGYDIVNEYDRVFTEFDEVVGRNYLCAIHLNDSKKPLGSRVDRHDSIGKGLIGIDFFRRFMQDSRFDDMPVILETPDDTIWRDEIKMLRSFES.

His-69, His-109, Glu-145, Asp-179, His-182, His-214, Asp-227, His-229, and Glu-259 together coordinate Zn(2+).

This sequence belongs to the AP endonuclease 2 family. Zn(2+) is required as a cofactor.

It catalyses the reaction Endonucleolytic cleavage to 5'-phosphooligonucleotide end-products.. Its function is as follows. Endonuclease IV plays a role in DNA repair. It cleaves phosphodiester bonds at apurinic or apyrimidinic (AP) sites, generating a 3'-hydroxyl group and a 5'-terminal sugar phosphate. This Phocaeicola vulgatus (strain ATCC 8482 / DSM 1447 / JCM 5826 / CCUG 4940 / NBRC 14291 / NCTC 11154) (Bacteroides vulgatus) protein is Probable endonuclease 4.